Here is a 404-residue protein sequence, read N- to C-terminus: MRELPHVLGIVLAGGEGKRLYPLTADRAKPAVPFGGAYRLIDFVLSNLVNARYLRICVLTQYKSHSLDRHISQNWRLSGLAGEYITPVPAQQRLGPRWYTGSADAIYQSLNLIYDEDPDYIIIFGADHVYRMDPEQMMQFHIESGAGATVAGIRVPRSEASAFGCIDADESGRIREFIEKPADPPGTPDDPEQTFVSMGNYIFTTKVLIDAIRADADDDHSDHDMGGDIIPRLVADGMAAVYDFKNNEVPGATERDHGYWRDVGTLDAFYDAHMDLVSVHPVFNLYNKRWPIRGESENLAPAKFVNGGSAQESVVGAGSIISAASVRNSVLSSNVVVDDGAIVEGSVLMPGVRIGRGAVVRHAILDKNVVVGPGEMVGVDLDKDRERFAISAGGVVAVGKGVWI.

Alpha-D-glucose 1-phosphate-binding positions include Tyr99, Gly164, 179-180 (EK), and Ser197.

The protein belongs to the bacterial/plant glucose-1-phosphate adenylyltransferase family.

The enzyme catalyses alpha-D-glucose 1-phosphate + ATP + H(+) = ADP-alpha-D-glucose + diphosphate. It participates in glycan biosynthesis; glycogen biosynthesis. In terms of biological role, involved in the biosynthesis of ADP-glucose building block, required in the biosynthesis of maltose-1-phosphate (M1P) and in the elongation reactions to produce linear alpha-1,4-glucans. Catalyzes the reaction between ATP and alpha-D-glucose 1-phosphate (G1P) to produce pyrophosphate and ADP-Glc. In Mycolicibacterium smegmatis (strain ATCC 700084 / mc(2)155) (Mycobacterium smegmatis), this protein is Glucose-1-phosphate adenylyltransferase.